An 855-amino-acid polypeptide reads, in one-letter code: Protein KRI1 homolog (855 aa).

6 disordered regions span residues 47 to 67 (VSES…VDPK), 82 to 117 (KDPC…KAKP), 130 to 196 (EHNG…KTKE), 312 to 342 (SLRR…MKEL), 424 to 453 (YDPR…CDYD), and 589 to 855 (KSLY…KKDN). Residues 48-64 (SESEFDSDSSSSEEDEV) show a composition bias toward acidic residues. Basic and acidic residues predominate over residues 82–91 (KDPCIYDKGT). Ser95, Ser97, Ser98, Ser137, and Ser138 each carry phosphoserine. Basic and acidic residues predominate over residues 160-176 (EEERRLKAEFRKVMNKE). Phosphoserine is present on Ser179. Residues 307 to 362 (RTIEQSLRRTDDKRKEKRKELKERKDQEKQQKMKELELVKEMKRKEIDEKIRKLKA) are a coiled coil. Residues 441 to 452 (CEDDDFNMDCDY) are compositionally biased toward acidic residues. Positions 609–619 (VTPAEATAPAE) are enriched in low complexity. Residues 630-640 (KSKRKRLKRKA) show a composition bias toward basic residues. Composition is skewed to basic and acidic residues over residues 650 to 664 (VLKE…KEAD) and 674 to 692 (SSKK…DANQ). Polar residues-rich tracts occupy residues 720–748 (VQNG…TTES), 756–773 (SNGN…QQRQ), and 792–805 (ANGT…NQKP). Low complexity predominate over residues 812–826 (KKTNNFKAKNKQNNN). The span at 842–855 (RKFHKREKYGKKDN) shows a compositional bias: basic residues.

It belongs to the KRI1 family.

The chain is Protein KRI1 homolog from Drosophila melanogaster (Fruit fly).